Reading from the N-terminus, the 595-residue chain is Mitoguardin 1 (595 aa).

2 helical membrane passes run 11–31 and 38–58; these read LPIK…YYSL and TGTK…IIIA.

This sequence belongs to the mitoguardin family. Homodimer and heterodimer; forms heterodimers with miga2.

The protein resides in the mitochondrion outer membrane. In terms of biological role, regulator of mitochondrial fusion: acts by forming homo- and heterodimers at the mitochondrial outer membrane and facilitating the formation of pld6/MitoPLD dimers. May act by regulating phospholipid metabolism via pld6/MitoPLD. The sequence is that of Mitoguardin 1 from Danio rerio (Zebrafish).